The sequence spans 323 residues: tRNA dimethylallyltransferase (323 aa).

ATP is bound at residue 12-19 (GPTASGKT). Residue 14–19 (TASGKT) coordinates substrate. Interaction with substrate tRNA regions lie at residues 37–40 (DSAL) and 161–165 (QRLVR).

It belongs to the IPP transferase family. In terms of assembly, monomer. Requires Mg(2+) as cofactor.

The enzyme catalyses adenosine(37) in tRNA + dimethylallyl diphosphate = N(6)-dimethylallyladenosine(37) in tRNA + diphosphate. Functionally, catalyzes the transfer of a dimethylallyl group onto the adenine at position 37 in tRNAs that read codons beginning with uridine, leading to the formation of N6-(dimethylallyl)adenosine (i(6)A). This Stutzerimonas stutzeri (strain A1501) (Pseudomonas stutzeri) protein is tRNA dimethylallyltransferase.